Here is a 114-residue protein sequence, read N- to C-terminus: Superoxide dismutase [Cu-Zn] (114 aa).

The Cu cation site is built by histidine 37, histidine 39, and histidine 54. The segment at 48–76 (CMSSGPHFNPRSKEHGAPTDENRHLGDLG) is disordered. Zn(2+) contacts are provided by histidine 54, histidine 62, histidine 71, and aspartate 74. The span at 58 to 73 (RSKEHGAPTDENRHLG) shows a compositional bias: basic and acidic residues. Histidine 111 lines the Cu cation pocket.

This sequence belongs to the Cu-Zn superoxide dismutase family. As to quaternary structure, homodimer. The cofactor is Cu cation. Zn(2+) is required as a cofactor.

It is found in the cytoplasm. It catalyses the reaction 2 superoxide + 2 H(+) = H2O2 + O2. Destroys radicals which are normally produced within the cells and which are toxic to biological systems. The polypeptide is Superoxide dismutase [Cu-Zn] (Drosophila obscura (Fruit fly)).